The primary structure comprises 100 residues: Ribosomal processing cysteine protease Prp (100 aa).

H16 (proton donor) is an active-site residue. Catalysis depends on C28, which acts as the Nucleophile.

Belongs to the Prp family. As to quaternary structure, homodimer.

Its function is as follows. An essential cysteine protease that cleaves the N-terminus from ribosomal protein bL27. This Mycoplasma pneumoniae (strain ATCC 29342 / M129 / Subtype 1) (Mycoplasmoides pneumoniae) protein is Ribosomal processing cysteine protease Prp.